The primary structure comprises 322 residues: Serine/threonine-protein phosphatase PP1 isozyme 6 (322 aa).

N-acetylmethionine is present on methionine 1. The Mn(2+) site is built by aspartate 61, histidine 63, aspartate 89, and asparagine 121. Residue histidine 122 is the Proton donor of the active site. The Mn(2+) site is built by histidine 170 and histidine 245. The segment at 303–322 (GFNNNVPRPGTPPHKGGKGR) is disordered.

It belongs to the PPP phosphatase family. PP-1 subfamily. Requires Mn(2+) as cofactor. Strongly up-regulated within developing flowers, especially in the tapetum, the developing and mature pollen and in the ovaries.

The protein localises to the nucleus. The protein resides in the cytoplasm. The catalysed reaction is O-phospho-L-seryl-[protein] + H2O = L-seryl-[protein] + phosphate. The enzyme catalyses O-phospho-L-threonyl-[protein] + H2O = L-threonyl-[protein] + phosphate. With respect to regulation, phosphatase activity is strongly reduced by the protein phosphatase inhibitor 2 (I-2). Functionally, serine/threonine-protein phosphatase that possesses phosphatase activity toward para-nitrophenyl phosphate (pNPP) in vitro. The protein is Serine/threonine-protein phosphatase PP1 isozyme 6 of Arabidopsis thaliana (Mouse-ear cress).